The sequence spans 894 residues: Glutamate receptor 3 (894 aa).

Positions 1–28 (MARQKKMGQSVLRAVFFLVLGLLGHSHG) are cleaved as a signal peptide. At 29 to 552 (GFPNTISIGG…GVFSFLDPLA (524 aa)) the chain is on the extracellular side. N-linked (GlcNAc...) asparagine glycosylation is found at Asn63, Asn266, Asn380, Asn415, and Asn422. A disulfide bond links Cys91 and Cys340. The L-glutamate site is built by Pro508, Thr510, and Arg515. Residues 553–573 (YEIWMCIVFAYIGVSVVLFLV) traverse the membrane as a helical segment. The Cytoplasmic segment spans residues 574–602 (SRFSPYEWHLEDNNEEPRDPQSPPDPPNE). An intramembrane region (helical; Pore-forming) is located at residues 603–618 (FGIFNSLWFSLGAFMQ). Residues 619-621 (QGC) lie within the membrane without spanning it. The S-palmitoyl cysteine moiety is linked to residue Cys621. Residues 622-627 (DISPRS) lie on the Cytoplasmic side of the membrane. Residues 628 to 648 (LSGRIVGGVWWFFTLIIISSY) form a helical membrane-spanning segment. The Extracellular portion of the chain corresponds to 649 to 823 (TANLAAFLTV…DKTSALSLSN (175 aa)). L-glutamate is bound by residues Ser686, Thr687, and Glu737. Cys750 and Cys805 are oxidised to a cystine. Residues 824-844 (VAGVFYILVGGLGLAMMVALI) traverse the membrane as a helical segment. Residues 845 to 894 (EFCYKSRAESKRMKLTKNTQNFKPAPATNTQNYATYREGYNVYGTESVKI) lie on the Cytoplasmic side of the membrane. A lipid anchor (S-palmitoyl cysteine) is attached at Cys847. Residues Tyr877 and Tyr887 each carry the phosphotyrosine modification.

It belongs to the glutamate-gated ion channel (TC 1.A.10.1) family. GRIA3 subfamily. As to quaternary structure, homotetramer or heterotetramer of pore-forming glutamate receptor subunits. Tetramers may be formed by the dimerization of dimers. Interacts with PICK1, GRIP1 and GRIP2. Found in a complex with GRIA1, GRIA2, GRIA4, CNIH2, CNIH3, CACNG2, CACNG3, CACNG4, CACNG5, CACNG7 and CACNG8. Interacts with CACNG5. Found in a complex with GRIA1, GRIA2, GRIA4, DLG4, CACNG8 and CNIH2.

Its subcellular location is the cell membrane. The protein localises to the postsynaptic cell membrane. The protein resides in the postsynaptic density membrane. It carries out the reaction Ca(2+)(in) = Ca(2+)(out). In terms of biological role, ionotropic glutamate receptor that functions as a ligand-gated cation channel, gated by L-glutamate and glutamatergic agonists such as alpha-amino-3-hydroxy-5-methyl-4-isoxazolepropionic acid (AMPA), quisqualic acid, and kainic acid. L-glutamate acts as an excitatory neurotransmitter at many synapses in the central nervous system and plays an important role in fast excitatory synaptic transmission by inducing long-term potentiation. Binding of the excitatory neurotransmitter L-glutamate induces a conformation change, leading to the opening of the cation channel, and thereby converts the chemical signal to an electrical impulse upon entry of calcium. The receptor then desensitizes rapidly and enters a transient inactive state, characterized by the presence of bound agonist. In the presence of CACNG8, shows resensitization which is characterized by a delayed accumulation of current flux upon continued application of glutamate. In Homo sapiens (Human), this protein is Glutamate receptor 3.